The sequence spans 793 residues: Signal transducer and activator of transcription 5A (793 aa).

The residue at position 90 (Tyr90) is a Phosphotyrosine. Ser128 carries the phosphoserine modification. In terms of domain architecture, SH2 spans 589-686; that stretch reads WNDGAILGFV…EVFAKYYTPV (98 aa). Phosphotyrosine is present on residues Tyr682 and Tyr694. A Phosphoserine modification is found at Ser779.

It belongs to the transcription factor STAT family. Forms a homodimer or a heterodimer with a related family member. Interacts with NCOA1 and SOCS7. Binds NR3C1. Interacts with ERBB4. Interacts with EBF4. Interacts with CD69. In terms of processing, ISGylated. Tyrosine phosphorylated in response to KITLG/SCF, IL2, IL3, IL7, IL15, CSF2/GMCSF, GH1, PRL, EPO and THPO. Activated KIT promotes phosphorylation on tyrosine residues and subsequent translocation to the nucleus. Tyrosine phosphorylated in response to constitutively activated FGFR1, FGFR2, FGFR3 and FGFR4. Tyrosine phosphorylation is required for DNA-binding activity and dimerization. Serine phosphorylation is also required for maximal transcriptional activity. Tyrosine phosphorylated in response to signaling via activated FLT3; wild-type FLT3 results in much weaker phosphorylation than constitutively activated mutant FLT3. Alternatively, can be phosphorylated by JAK2 at Tyr-694. In terms of tissue distribution, in the virgin, found in most tissues except brain and muscle. During lactation, abundantly found in mammary tissue, as well as in other secretory organs such as salivary gland and seminal vesicle.

It localises to the cytoplasm. The protein resides in the nucleus. Functionally, carries out a dual function: signal transduction and activation of transcription. Mediates cellular responses to the cytokine KITLG/SCF and other growth factors. May mediate cellular responses to activated FGFR1, FGFR2, FGFR3 and FGFR4. Binds to the GAS element and activates PRL-induced transcription. Regulates the expression of milk proteins during lactation. In Mus musculus (Mouse), this protein is Signal transducer and activator of transcription 5A (Stat5a).